The following is a 2184-amino-acid chain: Genome polyprotein (2184 aa).

Gly2 carries the N-myristoyl glycine; by host lipid modification. At Gly2–Gln1494 the chain is on the cytoplasmic side. Residues Phe566–Val582 form an amphipathic alpha-helix region. Residues His871 and Asp889 each act as for protease 2A activity in the active site. Zn(2+) contacts are provided by Cys906 and Cys908. The active-site For protease 2A activity is Cys960. Residues Cys966 and His968 each contribute to the Zn(2+) site. Positions Ser1100–Gln1172 are membrane-binding. Residues Ser1100–Thr1238 are oligomerization. The interval Ala1121 to Gln1125 is RNA-binding. The 157-residue stretch at Glu1204–Asn1360 folds into the SF3 helicase domain. 3 residues coordinate Zn(2+): Cys1368, Cys1380, and Cys1385. A C4-type; degenerate zinc finger spans residues Cys1368–Cys1385. Residues Glu1412–Val1419 are RNA-binding. Residues Leu1423–Gln1428 form an oligomerization region. An intramembrane segment occupies Ala1495–Tyr1510. Over Lys1511–Phe2184 the chain is Cytoplasmic. Tyr1520 bears the O-(5'-phospho-RNA)-tyrosine mark. The Peptidase C3 domain occupies Gly1540–Phe1718. Residues His1579, Glu1610, and Cys1686 each act as for protease 3C activity in the active site. A RdRp catalytic domain is found at Gly1949–Leu2065. 2 residues coordinate Mg(2+): Asp1955 and Asp2051.

This sequence belongs to the picornaviruses polyprotein family. As to quaternary structure, interacts with capsid protein VP1 and capsid protein VP3 to form heterotrimeric protomers. In terms of assembly, interacts with capsid protein VP0, and capsid protein VP3 to form heterotrimeric protomers. Five protomers subsequently associate to form pentamers which serve as building blocks for the capsid. Interacts with capsid protein VP2, capsid protein VP3 and capsid protein VP4 following cleavage of capsid protein VP0. Interacts with host CXADR. Interacts with capsid protein VP1 and capsid protein VP3 in the mature capsid. As to quaternary structure, interacts with capsid protein VP0 and capsid protein VP1 to form heterotrimeric protomers. Five protomers subsequently associate to form pentamers which serve as building blocks for the capsid. Interacts with capsid protein VP4 in the mature capsid. Interacts with protein 2C; this interaction may be important for virion morphogenesis. In terms of assembly, interacts with capsid protein VP1 and capsid protein VP3. Homodimer. As to quaternary structure, homohexamer; forms a hexameric ring structure with 6-fold symmetry characteristic of AAA+ ATPases. Interacts (via N-terminus) with host RTN3 (via reticulon domain); this interaction is important for viral replication. Interacts with capsid protein VP3; this interaction may be important for virion morphogenesis. In terms of assembly, interacts with protein 3CD. Homodimer. Interacts with host GBF1. Interacts (via GOLD domain) with host ACBD3 (via GOLD domain); this interaction allows the formation of a viral protein 3A/ACBD3 heterotetramer with a 2:2 stoichiometry, which will stimulate the recruitment of host PI4KB in order to synthesize PI4P at the viral RNA replication sites. As to quaternary structure, interacts with RNA-directed RNA polymerase. In terms of assembly, interacts with protein 3AB and with RNA-directed RNA polymerase. Interacts with Viral protein genome-linked and with protein 3CD. It depends on Mg(2+) as a cofactor. Post-translationally, specific enzymatic cleavages in vivo by the viral proteases yield processing intermediates and the mature proteins. Myristoylation is required for the formation of pentamers during virus assembly. Further assembly of 12 pentamers and a molecule of genomic RNA generates the provirion. In terms of processing, during virion maturation, immature virions are rendered infectious following cleavage of VP0 into VP4 and VP2. This maturation seems to be an autocatalytic event triggered by the presence of RNA in the capsid and it is followed by a conformational change infectious virion. Post-translationally, myristoylation is required during RNA encapsidation and formation of the mature virus particle. VPg is uridylylated by the polymerase into VPg-pUpU. This acts as a nucleotide-peptide primer for the genomic RNA replication.

It is found in the virion. The protein localises to the host cytoplasm. It localises to the host cytoplasmic vesicle membrane. The protein resides in the host nucleus. The catalysed reaction is a ribonucleoside 5'-triphosphate + H2O = a ribonucleoside 5'-diphosphate + phosphate + H(+). It catalyses the reaction Selective cleavage of Tyr-|-Gly bond in the picornavirus polyprotein.. The enzyme catalyses RNA(n) + a ribonucleoside 5'-triphosphate = RNA(n+1) + diphosphate. It carries out the reaction Selective cleavage of Gln-|-Gly bond in the poliovirus polyprotein. In other picornavirus reactions Glu may be substituted for Gln, and Ser or Thr for Gly.. Replication or transcription is subject to high level of random mutations by the nucleotide analog ribavirin. Functionally, forms an icosahedral capsid of pseudo T=3 symmetry with capsid proteins VP2 and VP3. The capsid is 300 Angstroms in diameter, composed of 60 copies of each capsid protein and enclosing the viral positive strand RNA genome. Capsid protein VP1 mainly forms the vertices of the capsid. Capsid protein VP1 interacts with host CXADR to provide virion attachment to target host cells. This attachment induces virion internalization. Tyrosine kinases are probably involved in the entry process. After binding to its receptor, the capsid undergoes conformational changes. Capsid protein VP1 N-terminus (that contains an amphipathic alpha-helix) and capsid protein VP4 are externalized. Together, they shape a pore in the host membrane through which viral genome is translocated to host cell cytoplasm. In terms of biological role, forms an icosahedral capsid of pseudo T=3 symmetry with capsid proteins VP2 and VP3. The capsid is 300 Angstroms in diameter, composed of 60 copies of each capsid protein and enclosing the viral positive strand RNA genome. Lies on the inner surface of the capsid shell. After binding to the host receptor, the capsid undergoes conformational changes. Capsid protein VP4 is released, Capsid protein VP1 N-terminus is externalized, and together, they shape a pore in the host membrane through which the viral genome is translocated into the host cell cytoplasm. Its function is as follows. Component of immature procapsids, which is cleaved into capsid proteins VP4 and VP2 after maturation. Allows the capsid to remain inactive before the maturation step. Functionally, cysteine protease that cleaves viral polyprotein and specific host proteins. It is responsible for the autocatalytic cleavage between the P1 and P2 regions, which is the first cleavage occurring in the polyprotein. Also cleaves the host translation initiation factor EIF4G1, in order to shut down the capped cellular mRNA translation. Inhibits the host nucleus-cytoplasm protein and RNA trafficking by cleaving host members of the nuclear pores. Counteracts stress granule formation probably by antagonizing its assembly or promoting its dissassembly. Cleaves and inhibits host IFIH1/MDA5, thereby inhibiting the type-I IFN production and the establishment of the antiviral state. Cleaves and inhibits host MAVS, thereby inhibiting the type-I IFN production and the establishment of the antiviral state. In terms of biological role, plays an essential role in the virus replication cycle by acting as a viroporin. Creates a pore in the host endoplasmic reticulum and as a consequence releases Ca2+ in the cytoplasm of infected cell. In turn, high levels of cytoplasmic calcium may trigger membrane trafficking and transport of viral ER-associated proteins to viroplasms, sites of viral genome replication. Induces and associates with structural rearrangements of intracellular membranes. Displays RNA-binding, nucleotide binding and NTPase activities. May play a role in virion morphogenesis and viral RNA encapsidation by interacting with the capsid protein VP3. Its function is as follows. Localizes the viral replication complex to the surface of membranous vesicles. Together with protein 3CD binds the Cis-Active RNA Element (CRE) which is involved in RNA synthesis initiation. Acts as a cofactor to stimulate the activity of 3D polymerase, maybe through a nucleid acid chaperone activity. Functionally, localizes the viral replication complex to the surface of membranous vesicles. It inhibits host cell endoplasmic reticulum-to-Golgi apparatus transport and causes the disassembly of the Golgi complex, possibly through GBF1 interaction. This would result in depletion of MHC, trail receptors and IFN receptors at the host cell surface. Plays an essential role in viral RNA replication by recruiting ACBD3 and PI4KB at the viral replication sites, thereby allowing the formation of the rearranged membranous structures where viral replication takes place. In terms of biological role, acts as a primer for viral RNA replication and remains covalently bound to viral genomic RNA. VPg is uridylylated prior to priming replication into VPg-pUpU. The oriI viral genomic sequence may act as a template for this. The VPg-pUpU is then used as primer on the genomic RNA poly(A) by the RNA-dependent RNA polymerase to replicate the viral genome. During genome replication, the VPg-RNA linkage is removed by the host TDP2, thereby accelerating replication. During the late stage of the replication cycle, host TDP2 is excluded from sites of viral RNA synthesis and encapsidation, allowing for the generation of progeny virions. Involved in the viral replication complex and viral polypeptide maturation. It exhibits protease activity with a specificity and catalytic efficiency that is different from protease 3C. Protein 3CD lacks polymerase activity. Protein 3CD binds to the 5'UTR of the viral genome. Its function is as follows. Replicates the viral genomic RNA on the surface of intracellular membranes. May form linear arrays of subunits that propagate along a strong head-to-tail interaction called interface-I. Covalently attaches UMP to a tyrosine of VPg, which is used to prime RNA synthesis. The positive stranded RNA genome is first replicated at virus induced membranous vesicles, creating a dsRNA genomic replication form. This dsRNA is then used as template to synthesize positive stranded RNA genomes. ss(+)RNA genomes are either translated, replicated or encapsidated. Functionally, major viral protease that mediates proteolytic processing of the polyprotein. Cleaves host EIF5B, contributing to host translation shutoff. Also cleaves host PABPC1, contributing to host translation shutoff. Cleaves host NLRP1, triggers host N-glycine-mediated degradation of the autoinhibitory NLRP1 N-terminal fragment. This is Genome polyprotein from Coxsackievirus B6 (strain Schmitt).